The chain runs to 112 residues: Large ribosomal subunit protein bL17 (112 aa).

It belongs to the bacterial ribosomal protein bL17 family. As to quaternary structure, part of the 50S ribosomal subunit. Contacts protein L32.

This chain is Large ribosomal subunit protein bL17, found in Moorella thermoacetica (strain ATCC 39073 / JCM 9320).